Reading from the N-terminus, the 164-residue chain is Respiratory growth induced protein 2 (164 aa).

This sequence belongs to the RGI1 family.

The protein resides in the cytoplasm. Functionally, involved in the control of energetic metabolism and significantly contribute to cell fitness, especially under respiratory growth conditions. This is Respiratory growth induced protein 2 (RGI2) from Candida glabrata (strain ATCC 2001 / BCRC 20586 / JCM 3761 / NBRC 0622 / NRRL Y-65 / CBS 138) (Yeast).